The chain runs to 188 residues: Marginal zone B- and B1-cell-specific protein (188 aa).

The signal sequence occupies residues 1–21 (MRLPLPLLLLFGCRAILGSFG). 3 cysteine pairs are disulfide-bonded: cysteine 49-cysteine 177, cysteine 52-cysteine 170, and cysteine 94-cysteine 142. The Prevents secretion from ER motif lies at 185–188 (REEL).

The protein belongs to the MZB1 family. In terms of assembly, part of the ER chaperone complex, a multi-protein complex in the endoplasmic reticulum containing a large number of molecular chaperones which associates with unassembled incompletely folded immunoglobulin heavy chains. Interacts with HSP90B1 and PDIA3 in a calcium-dependent manner. In terms of processing, forms an interchain disulfide bond with IgM monomers.

It localises to the endoplasmic reticulum lumen. The protein resides in the secreted. Associates with immunoglobulin M (IgM) heavy and light chains and promotes IgM assembly and secretion. May exert its effect by acting as a molecular chaperone or as an oxidoreductase as it displays a low level of oxidoreductase activity. Helps to diversify peripheral B-cell functions by regulating Ca(2+) stores, antibody secretion, and integrin activation. In terms of biological role, acts as a hormone-regulated adipokine/pro-inflammatory cytokine that is implicated in causing chronic inflammation, affecting cellular expansion and blunting insulin response in adipocytes. May have a role in the onset of insulin resistance. This is Marginal zone B- and B1-cell-specific protein (Mzb1) from Rattus norvegicus (Rat).